The chain runs to 112 residues: MSLTSSIRDKLYCMAEKKISEERRESTTQTAEELKVPSMEKELEELRREFFKFMEFCIPPKEVRDEVMKNLYNIPLSILKAFRTILDYEIKVLEERVKETERKPKSRRIAVE.

Coiled coils occupy residues 15-53 and 86-103; these read AEKK…FFKF and LDYE…TERK.

This is an uncharacterized protein from Aquifex aeolicus (strain VF5).